The sequence spans 325 residues: Odorant receptor 131-2 (325 aa).

Residues 1 to 22 lie on the Extracellular side of the membrane; that stretch reads MNSTSNSSLGNTFISKTLKEKS. Residues asparagine 2 and asparagine 6 are each glycosylated (N-linked (GlcNAc...) asparagine). Residues 23–43 traverse the membrane as a helical segment; the sequence is LTVQVLVGILLYVNGLMIFTF. Topologically, residues 44–54 are cytoplasmic; the sequence is LKKETFRDTRY. Residues 55–75 form a helical membrane-spanning segment; sequence ILFAQTLFVDSALMLFADLTL. Over 76 to 91 the chain is Extracellular; it reads VGSAYELFIHIISCYI. Cysteine 89 and cysteine 170 are disulfide-bonded. The helical transmembrane segment at 92–112 threads the bilayer; it reads FCTVMALLSICSPVTLVAMCL. Topologically, residues 113 to 135 are cytoplasmic; that stretch reads ERYVAICLPLRHASISSPKNTIN. Residues 136 to 156 form a helical membrane-spanning segment; the sequence is GLLIIWGVSSVIPLFIFIVSF. Residues 157 to 190 lie on the Extracellular side of the membrane; that stretch reads TYTPPNAMNSYVVCSNDVMFQVKWLAEMRALSQQ. Residues 191–211 form a helical membrane-spanning segment; the sequence is LLFVIMLCIVGSTYIKIMVAA. Residues 212–227 lie on the Cytoplasmic side of the membrane; it reads KSASAENKKSTYKGLR. Residues 228–248 traverse the membrane as a helical segment; that stretch reads TVILHGLQLILGMMQLITPYI. The Extracellular segment spans residues 249–267; it reads DILTLKVDIMLFINVKFSN. Residues 268 to 285 traverse the membrane as a helical segment; that stretch reads FMLFWIFPRCLSPLVYGL. The Cytoplasmic segment spans residues 286 to 325; the sequence is RDKKFYNALKYYAFCGIYVCKKHKIKDSKTIRGAVSIAIY.

The protein belongs to the G-protein coupled receptor 1 family. Homodimer. Monomer.

The protein resides in the cell membrane. It is found in the cytoplasm. Probable olfactory receptor. The sequence is that of Odorant receptor 131-2 from Danio rerio (Zebrafish).